The sequence spans 366 residues: Putative integrase/recombinase HI_1572 (366 aa).

One can recognise a Core-binding (CB) domain in the interval 54-133; that stretch reads ITLDELIDKY…SLSALMAKTI (80 aa). One can recognise a Tyr recombinase domain in the interval 168 to 331; sequence IFVSGYDVEH…DMAEGYKTKA (164 aa). Residues arginine 201, lysine 226, and histidine 308 contribute to the active site. Tyrosine 318 acts as the O-(3'-phospho-DNA)-tyrosine intermediate in catalysis.

It belongs to the 'phage' integrase family.

This Haemophilus influenzae (strain ATCC 51907 / DSM 11121 / KW20 / Rd) protein is Putative integrase/recombinase HI_1572.